The following is a 220-amino-acid chain: 7-cyano-7-deazaguanine synthase (220 aa).

Position 7–17 (7–17) interacts with ATP; that stretch reads LSGGMDSSITA. 4 residues coordinate Zn(2+): Cys-185, Cys-193, Cys-196, and Cys-199.

The protein belongs to the QueC family. The cofactor is Zn(2+).

The catalysed reaction is 7-carboxy-7-deazaguanine + NH4(+) + ATP = 7-cyano-7-deazaguanine + ADP + phosphate + H2O + H(+). It participates in purine metabolism; 7-cyano-7-deazaguanine biosynthesis. Catalyzes the ATP-dependent conversion of 7-carboxy-7-deazaguanine (CDG) to 7-cyano-7-deazaguanine (preQ(0)). The protein is 7-cyano-7-deazaguanine synthase of Nitratiruptor sp. (strain SB155-2).